Consider the following 252-residue polypeptide: Small ribosomal subunit protein uS2A (252 aa).

Ser2 carries the post-translational modification N-acetylserine. The segment at 209–252 (EVEQQVAEEATTEEAGEEEAKEEVTEEQAEATEWAEENADNVEW) is disordered. A compositionally biased stretch (acidic residues) spans 218–252 (ATTEEAGEEEAKEEVTEEQAEATEWAEENADNVEW).

The protein belongs to the universal ribosomal protein uS2 family. As to quaternary structure, component of the small ribosomal subunit. Mature ribosomes consist of a small (40S) and a large (60S) subunit. The 40S subunit contains about 33 different proteins and 1 molecule of RNA (18S). The 60S subunit contains about 49 different proteins and 3 molecules of RNA (25S, 5.8S and 5S). Interacts with RPS21.

It localises to the cytoplasm. Functionally, required for the assembly and/or stability of the 40S ribosomal subunit. Required for the processing of the 20S rRNA-precursor to mature 18S rRNA in a late step of the maturation of 40S ribosomal subunits. The polypeptide is Small ribosomal subunit protein uS2A (Saccharomyces cerevisiae (strain RM11-1a) (Baker's yeast)).